A 367-amino-acid chain; its full sequence is B2 bradykinin receptor (367 aa).

Residues Met-1 to Gln-36 are Extracellular-facing. Residues Asn-3 and Asn-14 are each glycosylated (N-linked (GlcNAc...) asparagine). Residues Ala-37–Leu-60 form a helical membrane-spanning segment. Topologically, residues His-61–Glu-69 are cytoplasmic. A helical transmembrane segment spans residues Ile-70–Ala-94. Residues Asn-95–Arg-107 are Extracellular-facing. A disulfide bridge links Cys-106 with Cys-187. Residues Val-108–Ile-129 traverse the membrane as a helical segment. At Asp-130 to Lys-151 the chain is on the cytoplasmic side. Tyr-132 bears the Phosphotyrosine mark. A helical membrane pass occupies residues Leu-152 to Met-174. Residues His-175–Met-197 lie on the Extracellular side of the membrane. Asn-183 is a glycosylation site (N-linked (GlcNAc...) asparagine). A helical transmembrane segment spans residues Val-198 to Leu-224. Residues Gln-225 to Lys-243 are Cytoplasmic-facing. Residues Ala-244–Leu-268 form a helical membrane-spanning segment. Topologically, residues Asp-269–Asp-287 are extracellular. Residues Val-288–Val-311 form a helical membrane-spanning segment. Residues Gly-312–Gln-367 are Cytoplasmic-facing. Tyr-323 is subject to Phosphotyrosine. Cys-327 carries S-palmitoyl cysteine lipidation. Ser-342 is subject to Phosphoserine. Thr-345 carries the post-translational modification Phosphothreonine. Phosphoserine; by GRK6 is present on residues Ser-349 and Ser-351.

The protein belongs to the G-protein coupled receptor 1 family. Bradykinin receptor subfamily. BDKRB2 sub-subfamily. In terms of assembly, forms a complex with PECAM1 and GNAQ. Interacts with PECAM1.

It localises to the cell membrane. In terms of biological role, receptor for bradykinin. It is associated with G proteins that activate a phosphatidylinositol-calcium second messenger system. The protein is B2 bradykinin receptor (BDKRB2) of Sus scrofa (Pig).